Here is a 278-residue protein sequence, read N- to C-terminus: Autophagy protein 5 (278 aa).

Residues 1–25 (MSSPPASTDHRLVGSTTGAPDTPSA) form a disordered region. Lys-128 is covalently cross-linked (Glycyl lysine isopeptide (Lys-Gly) (interchain with G-Cter in ATG12)).

It belongs to the ATG5 family. As to quaternary structure, conjugated with ATG12. Post-translationally, conjugated to ATG12; which is essential for autophagy.

Its subcellular location is the preautophagosomal structure membrane. In terms of biological role, involved in cytoplasm to vacuole transport (Cvt) and autophagic vesicle formation. Autophagy is essential for maintenance of amino acid levels and protein synthesis under nitrogen starvation. Required for selective autophagic degradation of the nucleus (nucleophagy). Also required for mitophagy, which eliminates defective or superfluous mitochondria in order to fulfill cellular energy requirements and prevent excess ROS production. Conjugation with ATG12, through a ubiquitin-like conjugating system involving ATG7 as an E1-like activating enzyme and ATG10 as an E2-like conjugating enzyme, is essential for its function. The ATG12-ATG5 conjugate acts as an E3-like enzyme which is required for lipidation of ATG8 and ATG8 association to the vesicle membranes. The sequence is that of Autophagy protein 5 (ATG5) from Chaetomium globosum (strain ATCC 6205 / CBS 148.51 / DSM 1962 / NBRC 6347 / NRRL 1970) (Soil fungus).